The chain runs to 111 residues: uncharacterized protein (111 aa).

In terms of domain architecture, HIT spans 8–111 (LFLKIIKREE…HVHIIPYYKK (104 aa)). Residues 100–104 (HTHVH) carry the Histidine triad motif motif.

This is an uncharacterized protein from Mesomycoplasma hyorhinis (Mycoplasma hyorhinis).